The sequence spans 643 residues: Nicastrin (643 aa).

Residues 1–20 (MRFKNVLVLLLLLVFSVINS) form the signal peptide. Topologically, residues 21–611 (EPSAPATISD…VFKIGNSTTE (591 aa)) are extracellular. A disulfide bridge links cysteine 42 with cysteine 54. Asparagine 96 and asparagine 166 each carry an N-linked (GlcNAc...) asparagine glycan. Disulfide bonds link cysteine 204–cysteine 210 and cysteine 308–cysteine 318. Asparagine 333 and asparagine 385 each carry an N-linked (GlcNAc...) asparagine glycan. 3 cysteine pairs are disulfide-bonded: cysteine 479–cysteine 486, cysteine 540–cysteine 551, and cysteine 546–cysteine 556. A glycan (N-linked (GlcNAc...) asparagine) is linked at asparagine 584. A helical membrane pass occupies residues 612 to 632 (IWFLVSGLIELLVSIGLILYV). Residues 633-643 (KKFLSNRYKLL) lie on the Cytoplasmic side of the membrane.

The protein belongs to the nicastrin family. As to quaternary structure, component of the gamma-secretase complex, a complex composed of a presenilin homodimer, nicastrin, aph1 and pen2.

It is found in the membrane. Essential subunit of the gamma-secretase complex, an endoprotease complex that catalyzes the intramembrane cleavage of integral membrane proteins such as Notch receptors and APP (amyloid-beta precursor protein). In Dictyostelium purpureum (Slime mold), this protein is Nicastrin.